Reading from the N-terminus, the 444-residue chain is Probable D-serine dehydratase (444 aa).

At K118 the chain carries N6-(pyridoxal phosphate)lysine.

The protein belongs to the serine/threonine dehydratase family. DsdA subfamily. It depends on pyridoxal 5'-phosphate as a cofactor.

It catalyses the reaction D-serine = pyruvate + NH4(+). This chain is Probable D-serine dehydratase, found in Acinetobacter baumannii (strain AB0057).